Reading from the N-terminus, the 246-residue chain is Small ribosomal subunit protein uS2 (246 aa).

It belongs to the universal ribosomal protein uS2 family.

The polypeptide is Small ribosomal subunit protein uS2 (Pseudomonas aeruginosa (strain LESB58)).